The following is a 95-amino-acid chain: uncharacterized protein (95 aa).

Residues 60–89 (VKNMINRIVEELDKRIDEIKEGLNELEKSG) adopt a coiled-coil conformation.

This is an uncharacterized protein from Sulfolobus islandicus filamentous virus (isolate Iceland/Hveragerdi) (SIFV).